A 94-amino-acid chain; its full sequence is MNKAEFIDLVKKAGKYNSKREAEEAINAFTLAVETALSKGESVELVGFGKFETAEQKGKEGKVPGSDKTYKTEDKRVPKFKPGKILKQKVEEGK.

Belongs to the bacterial histone-like protein family. In terms of assembly, homodimer.

Histone-like DNA-binding protein which is capable of wrapping DNA to stabilize it, and thus to prevent its denaturation under extreme environmental conditions. The chain is DNA-binding protein HU (hup) from Helicobacter pylori (strain J99 / ATCC 700824) (Campylobacter pylori J99).